Here is a 308-residue protein sequence, read N- to C-terminus: MKVLLANPRGFCAGVDRAIEIVECALKLHGAPVYVRHEVVHNKFVVDGLKNKGAVFVEDIADVPNNQVVIFSAHGVSIAVRRQTHNIGAIIYDATCPLVTKVHKEVARKQKQNYQVILIGHKGHPEVEGTLGQSSESNCVQLVETIEDVERLNLSKNMSFSYTTQTTLSIDDTQSIIDYLKLRIPTIDMPKKDDICYATQNRQDAVKILMQFSSVLLILGSSNSSNSNRLREIAEKIGIPAYLIDGIDNIDELWFKGVDTIGVTAGASAPEVLVQEVVHYLRDKGATKVIEVGGVKENIHFPVPKELR.

Cys12 contributes to the [4Fe-4S] cluster binding site. Positions 41 and 74 each coordinate (2E)-4-hydroxy-3-methylbut-2-enyl diphosphate. Residues His41 and His74 each contribute to the dimethylallyl diphosphate site. Isopentenyl diphosphate-binding residues include His41 and His74. Cys96 lines the [4Fe-4S] cluster pocket. His124 lines the (2E)-4-hydroxy-3-methylbut-2-enyl diphosphate pocket. Dimethylallyl diphosphate is bound at residue His124. His124 contacts isopentenyl diphosphate. The active-site Proton donor is the Glu126. Thr166 contributes to the (2E)-4-hydroxy-3-methylbut-2-enyl diphosphate binding site. Cys196 contacts [4Fe-4S] cluster. 4 residues coordinate (2E)-4-hydroxy-3-methylbut-2-enyl diphosphate: Ser224, Ser225, Asn226, and Ser268. The dimethylallyl diphosphate site is built by Ser224, Ser225, Asn226, and Ser268. Ser224, Ser225, Asn226, and Ser268 together coordinate isopentenyl diphosphate.

The protein belongs to the IspH family. The cofactor is [4Fe-4S] cluster.

It catalyses the reaction isopentenyl diphosphate + 2 oxidized [2Fe-2S]-[ferredoxin] + H2O = (2E)-4-hydroxy-3-methylbut-2-enyl diphosphate + 2 reduced [2Fe-2S]-[ferredoxin] + 2 H(+). The enzyme catalyses dimethylallyl diphosphate + 2 oxidized [2Fe-2S]-[ferredoxin] + H2O = (2E)-4-hydroxy-3-methylbut-2-enyl diphosphate + 2 reduced [2Fe-2S]-[ferredoxin] + 2 H(+). The protein operates within isoprenoid biosynthesis; dimethylallyl diphosphate biosynthesis; dimethylallyl diphosphate from (2E)-4-hydroxy-3-methylbutenyl diphosphate: step 1/1. It participates in isoprenoid biosynthesis; isopentenyl diphosphate biosynthesis via DXP pathway; isopentenyl diphosphate from 1-deoxy-D-xylulose 5-phosphate: step 6/6. Functionally, catalyzes the conversion of 1-hydroxy-2-methyl-2-(E)-butenyl 4-diphosphate (HMBPP) into a mixture of isopentenyl diphosphate (IPP) and dimethylallyl diphosphate (DMAPP). Acts in the terminal step of the DOXP/MEP pathway for isoprenoid precursor biosynthesis. In Vesicomyosocius okutanii subsp. Calyptogena okutanii (strain HA), this protein is 4-hydroxy-3-methylbut-2-enyl diphosphate reductase.